The sequence spans 226 residues: 1-hydroxy-2-glutathionyl-2-methyl-3-butene dehydrogenase (226 aa).

Belongs to the short-chain dehydrogenases/reductases (SDR) family.

It carries out the reaction 2-glutathionyl-2-methylbut-3-en-1-ol + 2 NAD(+) + H2O = 2-glutathionyl-2-methylbut-3-enoate + 2 NADH + 3 H(+). The enzyme catalyses 2-glutathionyl-2-methylbut-3-en-1-ol + NAD(+) = 2-glutathionyl-2-methylbut-3-enal + NADH + H(+). The catalysed reaction is 2-glutathionyl-2-methylbut-3-enal + NAD(+) + H2O = 2-glutathionyl-2-methylbut-3-enoate + NADH + 2 H(+). Functionally, involved in isoprene degradation. Catalyzes the two-step NAD(+)-dependent oxidation of 2-glutathionyl-2-methylbut-3-en-1-ol (HGMB) to 2-glutathionyl-2-methylbut-3-enoate (GMBA). The chain is 1-hydroxy-2-glutathionyl-2-methyl-3-butene dehydrogenase from Rhodococcus sp. (strain AD45).